Reading from the N-terminus, the 150-residue chain is Leukotriene C4 synthase (150 aa).

Residues 1-6 (MKEETA) are Cytoplasmic-facing. Residues 7-27 (LLATVTLLGVLLQAYFSLQVI) form a helical membrane-spanning segment. Topologically, residues 28–48 (SARRTFHVSPPLTSGPPEFER) are lumenal. Arginine 30 is a binding site for glutathione. Catalysis depends on arginine 31, which acts as the Proton donor. Serine 36 is modified (phosphoserine). A helical membrane pass occupies residues 49–69 (VFRAQVNCSEYFPLFLATLWV). Residues 51–55 (RAQVN) and 58–59 (EY) each bind glutathione. Residues 70 to 73 (AGIF) lie on the Cytoplasmic side of the membrane. The chain crosses the membrane as a helical span at residues 74 to 94 (FHEGAAALCGLFYLFARLRYF). Residue 93-97 (YFQGY) coordinates glutathione. At 95 to 104 (QGYARSAQHR) the chain is on the lumenal side. Arginine 104 functions as the Proton acceptor in the catalytic mechanism. Residues 105–124 (LDPLYASARALWLLVAMAAL) form a helical membrane-spanning segment. At 125 to 150 (GLLVHFLPGTLRAALFRWLQVLLPMA) the chain is on the cytoplasmic side.

Belongs to the MAPEG family. As to quaternary structure, homotrimer. Interacts with ALOX5AP and ALOX5. Phosphorylation at Ser-36 by RPS6KB1 inhibits the leukotriene-C4 synthase activity.

The protein resides in the nucleus outer membrane. It localises to the endoplasmic reticulum membrane. It is found in the nucleus membrane. The catalysed reaction is leukotriene C4 = leukotriene A4 + glutathione. It carries out the reaction (13S,14S)-epoxy-(4Z,7Z,9E,11E,16Z,19Z)-docosahexaenoate + glutathione = (13R)-S-glutathionyl-(14S)-hydroxy-(4Z,7Z,9E,11E,16Z,19Z)-docosahexaenoate. The protein operates within lipid metabolism; leukotriene C4 biosynthesis. With respect to regulation, inhibited by MK886. Its function is as follows. Catalyzes the conjugation of leukotriene A4 with reduced glutathione (GSH) to form leukotriene C4 with high specificity. Can also catalyze the transfer of a glutathionyl group from glutathione (GSH) to 13(S),14(S)-epoxy-docosahexaenoic acid to form maresin conjugate in tissue regeneration 1 (MCTR1), a bioactive lipid mediator that possess potent anti-inflammatory and proresolving actions. This Rattus norvegicus (Rat) protein is Leukotriene C4 synthase (Ltc4s).